Consider the following 735-residue polypeptide: Peroxisomal multifunctional enzyme type 2 (735 aa).

The interval M1–E305 is (3R)-hydroxyacyl-CoA dehydrogenase. Residues L13 to I37, L21, and D40 contribute to the NAD(+) site. K46 is subject to N6-acetyllysine; alternate. Residue K46 is modified to N6-succinyllysine; alternate. A Phosphoserine modification is found at S52. N6-succinyllysine occurs at positions 57 and 68. S75 to V76 serves as a coordination point for NAD(+). K84 is subject to N6-succinyllysine. N99 lines the NAD(+) pocket. S151 is a substrate binding site. Residue Y164 is the Proton acceptor of the active site. Residues Y164 to K168 and A196 to R199 contribute to the NAD(+) site. T265 bears the Phosphothreonine mark. An N6-succinyllysine modification is found at K275. Phosphoserine is present on residues S304 and S308. The tract at residues S321 to L621 is enoyl-CoA hydratase 2. At K355 the chain carries N6-succinyllysine. Residue H405–G406 participates in (3R)-3-hydroxydecanoyl-CoA binding. K423 is modified (N6-succinyllysine). Residues K434, D509 to H514, G532, and F562 each bind (3R)-3-hydroxydecanoyl-CoA. The 117-residue stretch at V483 to N599 folds into the MaoC-like domain. K564 carries the post-translational modification N6-acetyllysine. N6-succinyllysine occurs at positions 578 and 662. One can recognise an SCP2 domain in the interval S623–L735. K668 bears the N6-acetyllysine mark. Q705 is a substrate binding site. K706 carries the N6-acetyllysine modification. A substrate-binding site is contributed by Q723. At K724 the chain carries N6-succinyllysine. Residues A733–L735 carry the Microbody targeting signal motif.

This sequence belongs to the short-chain dehydrogenases/reductases (SDR) family. Homodimer. Present in many tissues with highest concentrations in liver and kidney.

It localises to the peroxisome. The enzyme catalyses a (3R)-3-hydroxyacyl-CoA + NAD(+) = a 3-oxoacyl-CoA + NADH + H(+). It catalyses the reaction (24R,25R)-3alpha,7alpha,12alpha,24-tetrahydroxy-5beta-cholestan-26-oyl-CoA = (24E)-3alpha,7alpha,12alpha-trihydroxy-5beta-cholest-24-en-26-oyl-CoA + H2O. It carries out the reaction a (3R)-3-hydroxyacyl-CoA = a (2E)-enoyl-CoA + H2O. The catalysed reaction is (2E)-octenoyl-CoA + H2O = (3R)-hydroxyoctanoyl-CoA. The enzyme catalyses (3R)-hydroxyoctanoyl-CoA + NAD(+) = 3-oxooctanoyl-CoA + NADH + H(+). It catalyses the reaction (3R)-hydroxyhexadecanoyl-CoA + NAD(+) = 3-oxohexadecanoyl-CoA + NADH + H(+). It carries out the reaction (2E)-hexadecenedioyl-CoA + H2O = (3R)-hydroxyhexadecanedioyl-CoA. The catalysed reaction is (3R)-hydroxyhexadecanedioyl-CoA + NAD(+) = 3-oxohexadecanedioyl-CoA + NADH + H(+). The enzyme catalyses (3R)-hydroxyhexadecanoyl-CoA = (2E)-hexadecenoyl-CoA + H2O. It catalyses the reaction (3R)-3-hydroxydecanoyl-CoA = (2E)-decenoyl-CoA + H2O. It carries out the reaction (3R)-3-hydroxydecanoyl-CoA + NAD(+) = 3-oxodecanoyl-CoA + NADH + H(+). The catalysed reaction is (24R,25R)-3alpha,7alpha,12alpha,24-tetrahydroxy-5beta-cholestan-26-oyl-CoA + NAD(+) = 3alpha,7alpha,12alpha-trihydroxy-24-oxo-5beta-cholestan-26-oyl-CoA + NADH + H(+). Its pathway is lipid metabolism; fatty acid beta-oxidation. In terms of biological role, bifunctional enzyme acting on the peroxisomal fatty acid beta-oxidation pathway. Catalyzes two of the four reactions in fatty acid degradation: hydration of 2-enoyl-CoA (trans-2-enoyl-CoA) to produce (3R)-3-hydroxyacyl-CoA, and dehydrogenation of (3R)-3-hydroxyacyl-CoA to produce 3-ketoacyl-CoA (3-oxoacyl-CoA), which is further metabolized by SCPx. Can use straight-chain and branched-chain fatty acids, as well as bile acid intermediates as substrates. This chain is Peroxisomal multifunctional enzyme type 2, found in Mus musculus (Mouse).